Here is a 1059-residue protein sequence, read N- to C-terminus: Transmembrane protease serine 9 (1059 aa).

Residues 1 to 29 lie on the Cytoplasmic side of the membrane; it reads MEPTVADVHLVPRTTKEVPALDAACCRAA. A helical; Signal-anchor for type II membrane protein membrane pass occupies residues 30–50; that stretch reads SIGVVATSLVVLTLGVLLAFL. At 51–1059 the chain is on the extracellular side; the sequence is STQGFHVDHT…RGWIGQHIQE (1009 aa). The 38-residue stretch at 153–190 folds into the LDL-receptor class A domain; sequence RCPGNSFSCGNSQCVTKVNPECDDQEDCSDGSDEAHCE. Intrachain disulfides connect cysteine 154–cysteine 166, cysteine 161–cysteine 180, cysteine 174–cysteine 189, and cysteine 228–cysteine 244. Positions 203–436 constitute a Peptidase S1 1 domain; it reads IVGGMEASPG…LRDWILEATT (234 aa). Catalysis depends on charge relay system residues histidine 243 and aspartate 292. Cystine bridges form between cysteine 326/cysteine 393, cysteine 358/cysteine 372, and cysteine 383/cysteine 412. Serine 387 acts as the Charge relay system in catalysis. The interval 443-469 is disordered; it reads APTMAPAPAAPSTAWPTSPESPVVSTP. The Peptidase S1 2 domain maps to 504–736; it reads VVGGFGAASG…LKGWILEIMS (233 aa). Cysteine 529 and cysteine 545 form a disulfide bridge. The active-site Charge relay system is histidine 544. Asparagine 547 is a glycosylation site (N-linked (GlcNAc...) asparagine). The active-site Charge relay system is the aspartate 592. Disulfide bonds link cysteine 626-cysteine 693, cysteine 658-cysteine 672, and cysteine 683-cysteine 712. N-linked (GlcNAc...) asparagine glycosylation is found at asparagine 638 and asparagine 663. The Charge relay system role is filled by serine 687. The tract at residues 758-814 is disordered; sequence TTAGLTVPGATPSRPTPGAASRVTGQPANSTLSAVSTTARGQTPFPDAPEATTHTQL. Residues 780–798 show a composition bias toward polar residues; sequence VTGQPANSTLSAVSTTARG. The N-linked (GlcNAc...) asparagine glycan is linked to asparagine 786. A Peptidase S1 3 domain is found at 827–1058; it reads IVGGSAAGRG…VRGWIGQHIQ (232 aa). 4 disulfides stabilise this stretch: cysteine 853/cysteine 869, cysteine 949/cysteine 1015, cysteine 980/cysteine 994, and cysteine 1005/cysteine 1034.

It belongs to the peptidase S1 family. In terms of processing, proteolytically cleaved to generate 3 independent serine protease chains. The cleaved chains may remain attached to the membrane thanks to disulfide bonds. It is unclear whether cleavage always takes place. As to expression, expressed in fetal human tissues, such as kidney, liver, lung and brain, and in a variety of tumor cell lines. Weakly expressed in adult tissues including skeletal muscle, liver, placenta and heart.

The protein localises to the cell membrane. Its activity is regulated as follows. Inhibited by serine protease inhibitors PMSF and 4-(2-aminoethyl)benzenesulfonyl fluoride, but not by EDTA. Its function is as follows. Serase-1 and serase-2 are serine proteases that hydrolyze the peptides N-t-Boc-Gln-Ala-Arg-AMC and N-t-Boc-Gln-Gly-Arg-AMC. In contrast, N-t-Boc-Ala-Phe-Lys-AMC and N-t-Boc-Ala-Pro-Ala-AMC are not significantly hydrolyzed. The chain is Transmembrane protease serine 9 (TMPRSS9) from Homo sapiens (Human).